We begin with the raw amino-acid sequence, 667 residues long: UvrABC system protein B (667 aa).

In terms of domain architecture, Helicase ATP-binding spans 31 to 414 (KNFEAGAKAQ…EAEQTDIQVD (384 aa)). Position 44 to 51 (44 to 51 (GATGTGKT)) interacts with ATP. The Beta-hairpin motif lies at 97 to 120 (YYDYYQPEAYVPSSDTYIEKDSSI). The region spanning 435–597 (QIDDLVGEIN…ITPKTIIKPI (163 aa)) is the Helicase C-terminal domain. Residues 630 to 665 (LEMVERLSEQMRLAAKKLDFEQAATLRDTILELKSE) form the UVR domain.

The protein belongs to the UvrB family. In terms of assembly, forms a heterotetramer with UvrA during the search for lesions. Interacts with UvrC in an incision complex.

Its subcellular location is the cytoplasm. The UvrABC repair system catalyzes the recognition and processing of DNA lesions. A damage recognition complex composed of 2 UvrA and 2 UvrB subunits scans DNA for abnormalities. Upon binding of the UvrA(2)B(2) complex to a putative damaged site, the DNA wraps around one UvrB monomer. DNA wrap is dependent on ATP binding by UvrB and probably causes local melting of the DNA helix, facilitating insertion of UvrB beta-hairpin between the DNA strands. Then UvrB probes one DNA strand for the presence of a lesion. If a lesion is found the UvrA subunits dissociate and the UvrB-DNA preincision complex is formed. This complex is subsequently bound by UvrC and the second UvrB is released. If no lesion is found, the DNA wraps around the other UvrB subunit that will check the other stand for damage. This chain is UvrABC system protein B, found in Latilactobacillus sakei subsp. sakei (strain 23K) (Lactobacillus sakei subsp. sakei).